Reading from the N-terminus, the 264-residue chain is Isoprenyl transferase (264 aa).

The active site involves D43. D43 contributes to the Mg(2+) binding site. Substrate-binding positions include 44–47, W48, R56, H60, and 88–90; these read GNGR and STE. N91 acts as the Proton acceptor in catalysis. Substrate is bound by residues W92, R94, R211, and 217–219; that span reads RTS. E230 is a Mg(2+) binding site.

Belongs to the UPP synthase family. As to quaternary structure, homodimer. Requires Mg(2+) as cofactor.

Catalyzes the condensation of isopentenyl diphosphate (IPP) with allylic pyrophosphates generating different type of terpenoids. The sequence is that of Isoprenyl transferase from Bifidobacterium longum (strain NCC 2705).